The sequence spans 460 residues: MKKVILIGRPNVGKSSLFNRFVGKRIAITSDISGTTRDTNKTVIEIFDKKCILIDSGGLDDSSEMFAKVQAKTLKEVRNCDIILFIVDGKFMPSDDEKKLFHSFSGLNKPLALVINKIDSKKDEERSFEFIEFGAKDKFNISVSHNDGIDEVKSWIYKLLDDEISADESENFDDFISNLDENGEILEEKDESFYENKPIKVGIIGRVNVGKSSLLNALVKENRAVVSEVAGTTIDPVNENYTFNDKVIEFVDTAGIRKRGKIEGIEKFALNRTEKILEQCDIALMVLDASEPFSELDERIAGLAAKFELGVIIVLNKWDKSEEDFDKVQKKIKDKFRFLSYAPIISVSALGGKRIHKIYDMILEIYANFTQKIATSKLNDFIAEATAQHPIPQDKGKNVKIYYAAQIGFAPPKIALVMNRTVLHFSYKRYLINQMRENFTLNGTPVILLPRKRGNSKDEK.

EngA-type G domains follow at residues 2-164 (KKVI…DDEI) and 199-370 (IKVG…ANFT). GTP contacts are provided by residues 8–15 (GRPNVGKS), 55–59 (DSGGL), 116–119 (NKID), 205–212 (GRVNVGKS), 252–256 (DTAGI), and 316–319 (NKWD). The KH-like domain maps to 371 to 454 (QKIATSKLND…PVILLPRKRG (84 aa)).

Belongs to the TRAFAC class TrmE-Era-EngA-EngB-Septin-like GTPase superfamily. EngA (Der) GTPase family. In terms of assembly, associates with the 50S ribosomal subunit.

Its function is as follows. GTPase that plays an essential role in the late steps of ribosome biogenesis. In Campylobacter hominis (strain ATCC BAA-381 / DSM 21671 / CCUG 45161 / LMG 19568 / NCTC 13146 / CH001A), this protein is GTPase Der.